Consider the following 521-residue polypeptide: Phosphoenolpyruvate carboxykinase (ATP) (521 aa).

Substrate contacts are provided by Arg52, Tyr186, and Lys192. ATP is bound by residues Lys192, His211, and 227-235 (GLSGTGKTT). Lys192 and His211 together coordinate Mn(2+). Residue Asp248 participates in Mn(2+) binding. ATP is bound by residues Glu276, Arg313, 432 to 433 (RI), and Thr438. Arg313 serves as a coordination point for substrate.

The protein belongs to the phosphoenolpyruvate carboxykinase (ATP) family. Mn(2+) serves as cofactor.

It localises to the cytoplasm. It carries out the reaction oxaloacetate + ATP = phosphoenolpyruvate + ADP + CO2. Its pathway is carbohydrate biosynthesis; gluconeogenesis. In terms of biological role, involved in the gluconeogenesis. Catalyzes the conversion of oxaloacetate (OAA) to phosphoenolpyruvate (PEP) through direct phosphoryl transfer between the nucleoside triphosphate and OAA. The polypeptide is Phosphoenolpyruvate carboxykinase (ATP) (Caldanaerobacter subterraneus subsp. tengcongensis (strain DSM 15242 / JCM 11007 / NBRC 100824 / MB4) (Thermoanaerobacter tengcongensis)).